An 888-amino-acid polypeptide reads, in one-letter code: Serine/arginine repetitive matrix protein 1 (888 aa).

A PWI domain is found at Gln27–Leu126. A compositionally biased stretch (basic and acidic residues) spans Glu139 to Arg169. The disordered stretch occupies residues Glu139–Ser888. Over residues Ser170–Ser206 the composition is skewed to basic residues. 2 stretches are compositionally biased toward basic and acidic residues: residues Pro213–Val232 and Glu254–Arg276. Composition is skewed to basic residues over residues Gln277 to Pro325 and Pro332 to Ser347. Low complexity-rich tracts occupy residues Ser348–Arg364 and Ser473–Ser496. Basic residues-rich tracts occupy residues Pro528 to Ser554 and Pro561 to Ser585. The segment covering Pro586–Ser598 has biased composition (low complexity). 2 stretches are compositionally biased toward basic residues: residues Pro614–Ser629 and Ala642–Gly656. The span at Ser662–Pro677 shows a compositional bias: basic and acidic residues. 3 stretches are compositionally biased toward low complexity: residues Ala697–Arg712, Ala728–Pro749, and Ala763–Ala775. The span at Ser780–Asn790 shows a compositional bias: polar residues. A compositionally biased stretch (basic residues) spans Lys798–Glu823. A compositionally biased stretch (low complexity) spans Ala826–Gln843. A compositionally biased stretch (basic and acidic residues) spans Asp866–Leu876.

This sequence belongs to the splicing factor SR family.

It is found in the nucleus. Functionally, involved in pre-mRNA splicing and processing events. The sequence is that of Serine/arginine repetitive matrix protein 1 (SRRM1) from Gallus gallus (Chicken).